The primary structure comprises 228 residues: Early nodulin-like protein 18 (228 aa).

A signal peptide spans 1–26 (MSPSCSSCVNVLLIMCLMLLSLSADA). The 121-residue stretch at 28-148 (KNYTVGESTG…GQHFMINVTH (121 aa)) folds into the Phytocyanin domain. Residues Asn-29, Asn-71, Asn-94, and Asn-145 are each glycosylated (N-linked (GlcNAc...) asparagine). An intrachain disulfide couples Cys-86 to Cys-136. Residues 148–211 (HGQGLPDSSS…VHSKKSSSST (64 aa)) form a disordered region. Residues 153 to 170 (PDSSSPDDAAAPGPSESS) are compositionally biased toward low complexity. The span at 188-204 (DHPKDIESADDDKEVHS) shows a compositional bias: basic and acidic residues. The GPI-anchor amidated serine moiety is linked to residue Ser-204. Residues 205–228 (KKSSSSTTKTSLFCFVFMGLFASF) constitute a propeptide, removed in mature form.

This sequence belongs to the early nodulin-like (ENODL) family. As to expression, mostly expressed in seedlings, roots and flowers, and, to a lower extent, in leaves, stems and seeds.

It localises to the cell membrane. Functionally, may act as a carbohydrate transporter. The polypeptide is Early nodulin-like protein 18 (Arabidopsis thaliana (Mouse-ear cress)).